Reading from the N-terminus, the 293-residue chain is Ribonuclease HIII (293 aa).

The RNase H type-2 domain occupies 78 to 293 (LPLIGTDEVG…TEKAKKRLER (216 aa)). Residues D84, E85, and D187 each coordinate a divalent metal cation.

The protein belongs to the RNase HII family. RnhC subfamily. Requires Mn(2+) as cofactor. The cofactor is Mg(2+).

Its subcellular location is the cytoplasm. The enzyme catalyses Endonucleolytic cleavage to 5'-phosphomonoester.. Its function is as follows. Endonuclease that specifically degrades the RNA of RNA-DNA hybrids. The polypeptide is Ribonuclease HIII (Streptococcus pneumoniae (strain 70585)).